We begin with the raw amino-acid sequence, 202 residues long: ATP-dependent Clp protease proteolytic subunit (202 aa).

Ser-101 functions as the Nucleophile in the catalytic mechanism. His-126 is a catalytic residue.

The protein belongs to the peptidase S14 family. As to quaternary structure, component of the chloroplastic Clp protease core complex.

Its subcellular location is the plastid. It localises to the chloroplast stroma. It carries out the reaction Hydrolysis of proteins to small peptides in the presence of ATP and magnesium. alpha-casein is the usual test substrate. In the absence of ATP, only oligopeptides shorter than five residues are hydrolyzed (such as succinyl-Leu-Tyr-|-NHMec, and Leu-Tyr-Leu-|-Tyr-Trp, in which cleavage of the -Tyr-|-Leu- and -Tyr-|-Trp bonds also occurs).. Functionally, cleaves peptides in various proteins in a process that requires ATP hydrolysis. Has a chymotrypsin-like activity. Plays a major role in the degradation of misfolded proteins. The protein is ATP-dependent Clp protease proteolytic subunit of Illicium oligandrum (Star anise).